The primary structure comprises 259 residues: Bisphosphoglycerate mutase (259 aa).

Position 2 is an N-acetylserine (serine 2). Substrate-binding positions include arginine 10–asparagine 17, cysteine 23–serine 24, arginine 62, glutamate 89–tyrosine 92, arginine 100, and arginine 116–arginine 117. Histidine 11 serves as the catalytic Tele-phosphohistidine intermediate. Glutamate 89 serves as the catalytic Proton donor/acceptor. Threonine 122 is modified (phosphothreonine). Glycine 189 to asparagine 190 lines the substrate pocket.

The protein belongs to the phosphoglycerate mutase family. BPG-dependent PGAM subfamily. As to quaternary structure, homodimer.

The catalysed reaction is (2R)-3-phospho-glyceroyl phosphate = (2R)-2,3-bisphosphoglycerate + H(+). The enzyme catalyses (2R)-2-phosphoglycerate = (2R)-3-phosphoglycerate. With respect to regulation, at alkaline pH BPGM favors the synthase reaction; however, at lower pH the phosphatase reaction is dominant. Inhibited by citrate. Functionally, plays a major role in regulating hemoglobin oxygen affinity by controlling the levels of its allosteric effector 2,3-bisphosphoglycerate (2,3-BPG). Also exhibits mutase (EC 5.4.2.11) activity. The sequence is that of Bisphosphoglycerate mutase (BPGM) from Bos taurus (Bovine).